The sequence spans 471 residues: Acetylcholinesterase collagenic tail peptide (471 aa).

The first 30 residues, 1–30, serve as a signal peptide directing secretion; it reads MLGILLQKATATLASGLNSSRAGMFPIALG. The segment at 70 to 86 is PRAD; the sequence is CCLLTPPPPPMFPPPFF. 2 consecutive Collagen-like domains span residues 118–282 and 293–307; these read GPPG…SGLP and GPKGERGLPGPVGRC. Disordered regions lie at residues 140–205 and 237–267; these read EIGE…GEKG and KGVSGAPGHRGPVGRPGKRGKTGLKGDIGPP. Composition is skewed to low complexity over residues 155 to 164 and 242 to 251; these read VRGPRGMPGS and APGHRGPVGR. Repeat copies occupy residues 388 to 413 and 420 to 443. A 2 X 26 AA approximate repeats region spans residues 388–443; sequence FCGDEIVQVENGEECDDGNRIVTDSCINCKQAYCGDGYLQSGLEECDGKDFGYHTC.

The protein belongs to the COLQ family. As to quaternary structure, the asymmetric form of AChE is a disulfide-bonded oligomer composed of a collagenic subunit (Q) and a variable number of asymmetric (T) catalytic subunits. The N-terminal of the collagenic subunit (Q) associates with the C-terminal of the catalytic subunit (T). In terms of tissue distribution, expressed in electric organs but not in muscle.

It is found in the synapse. Anchors the catalytic subunits of asymmetric AChE to the synaptic basal lamina. The sequence is that of Acetylcholinesterase collagenic tail peptide from Torpedo marmorata (Marbled electric ray).